Here is a 148-residue protein sequence, read N- to C-terminus: Ferredoxin-thioredoxin reductase catalytic chain, chloroplastic (148 aa).

Residues 1–35 (MKALQASTSYSFFSKSSSATLQRRTHRPQCVILSK) constitute a chloroplast transit peptide. A [4Fe-4S] cluster-binding site is contributed by Cys-87. The active-site Nucleophile is the Cys-89. A disulfide bridge links Cys-89 with Cys-119. [4Fe-4S] cluster is bound by residues Cys-106, Cys-108, and Cys-117.

This sequence belongs to the ferredoxin thioredoxin reductase beta subunit family. In terms of assembly, heterodimer of subunit A (variable subunit) and subunit B (catalytic subunit). Heterodimeric FTR forms a complex with ferredoxin and thioredoxin. Requires [4Fe-4S] cluster as cofactor.

Its subcellular location is the plastid. The protein localises to the chloroplast. The enzyme catalyses [thioredoxin]-disulfide + 2 reduced [2Fe-2S]-[ferredoxin] + 2 H(+) = [thioredoxin]-dithiol + 2 oxidized [2Fe-2S]-[ferredoxin]. Functionally, catalytic subunit of the ferredoxin-thioredoxin reductase (FTR), which catalyzes the two-electron reduction of thioredoxins by the electrons provided by reduced ferredoxin. The protein is Ferredoxin-thioredoxin reductase catalytic chain, chloroplastic of Spinacia oleracea (Spinach).